A 1674-amino-acid polypeptide reads, in one-letter code: E3 ubiquitin-protein ligase SHPRH (1674 aa).

Positions 1–26 (MSSRRKRAPPMKVDEERQQQLHWNMH) are disordered. The span at 12 to 26 (KVDEERQQQLHWNMH) shows a compositional bias: basic and acidic residues. A phosphoserine mark is found at S259 and S261. The Helicase ATP-binding; first part domain maps to 302–384 (YQREAVNWML…TVEVLALILT (83 aa)). Residue 368–375 (DEMGLGKT) participates in ATP binding. The H15 domain maps to 433–507 (HCPPTRVMIL…GFSGTFTLGK (75 aa)). The interval 524-548 (SPRKIEKELRKSVNKDADSEYLPSN) is disordered. Positions 526–541 (RKIEKELRKSVNKDAD) are enriched in basic and acidic residues. S626 is subject to Phosphoserine. The PHD-type zinc finger occupies 649–700 (RFECICGEFDQIGHKPRVQCLKCHLWQHAKCVNYEEKNLKVKPFYCPHCLVA). In terms of domain architecture, Helicase ATP-binding; second part spans 701–859 (MEPVSTRATL…FGLVVFLGIE (159 aa)). The short motif at 810-813 (DEAQ) is the DEAQ box element. Residues 1423–1470 (CPICARQLGKQWAVLTCGHCFCNECTSIIIEQYSVGSHRSSIKCAICR) form an RING-type zinc finger. In terms of domain architecture, Helicase C-terminal spans 1505–1663 (AVVRTLMKIQ…ASVLTVAGLA (159 aa)).

The protein belongs to the SNF2/RAD54 helicase family. As to quaternary structure, homodimer. Interacts with HLTF, PCNA, UBE2N and RAD18. As to expression, broadly expressed (at protein level).

The enzyme catalyses S-ubiquitinyl-[E2 ubiquitin-conjugating enzyme]-L-cysteine + [acceptor protein]-L-lysine = [E2 ubiquitin-conjugating enzyme]-L-cysteine + N(6)-ubiquitinyl-[acceptor protein]-L-lysine.. Its pathway is protein modification; protein ubiquitination. E3 ubiquitin-protein ligase involved in DNA repair. Upon genotoxic stress, accepts ubiquitin from the UBE2N-UBE2V2 E2 complex and transfers it to 'Lys-164' of PCNA which had been monoubiquitinated by UBE2A/B-RAD18, promoting the formation of non-canonical poly-ubiquitin chains linked through 'Lys-63'. This chain is E3 ubiquitin-protein ligase SHPRH (Shprh), found in Mus musculus (Mouse).